A 228-amino-acid chain; its full sequence is MGEPQQVSALPIPPMQYIKEYTDENIRKGLAPKPPLPINDSYMMFGNQFQCDDLIIRPLETQGIERLHPVQFDHKKELRKLLMSILVNFLDMLDILIRSPGSIRREEKLEDIKLLFVHMHHLINEYRPHQARETLRVMMEVQKRQRLETAERFQKHLERVVEMIQNCLASLPDDLPLPNGADSVKTEPMDVQEPCTDHYKGSQEAAASMKEATIDKDAAMCVIIDEMT.

Belongs to the Mediator complex subunit 7 family. Component of the Mediator complex.

It localises to the nucleus. In terms of biological role, component of the Mediator complex, a coactivator involved in the regulated transcription of nearly all RNA polymerase II-dependent genes. Mediator functions as a bridge to convey information from gene-specific regulatory proteins to the basal RNA polymerase II transcription machinery. Mediator is recruited to promoters by direct interactions with regulatory proteins and serves as a scaffold for the assembly of a functional preinitiation complex with RNA polymerase II and the general transcription factors. The protein is Mediator of RNA polymerase II transcription subunit 7-B (med7-b) of Xenopus laevis (African clawed frog).